The chain runs to 588 residues: Cyclomaltodextrinase (588 aa).

Residues histidine 247 and arginine 326 each coordinate substrate. Residue aspartate 328 is the Nucleophile of the active site. The active-site Proton donor is glutamate 357. Substrate contacts are provided by residues 423–424, aspartate 468, and arginine 472; that span reads HD.

It belongs to the glycosyl hydrolase 13 family. In terms of assembly, exists as a monomer or a homodimer in solution. Homodimer is more active and stable than the monomer.

It catalyses the reaction cyclomaltodextrin + H2O = linear maltodextrin. Its activity is regulated as follows. No metal dependence, but Mn(2+) increases the activity with alpha-cyclodextrin as substrate. No effect on the activity with presence or absence of Ca(2+), Zn(2+), Tween-20 or EDTA. Its function is as follows. Hydrolyzes alpha-, beta- and gamma-cyclodextrins with the highest activity with alpha-cyclodextrin (cyclomaltohexaose). Pullulan is the preferred substrate from linear substrates. Maltose is a major product of these reactions. Is also able to hydrolyze maltotriose and acarbose, and transglycosylate their hydrolytic products. Major reaction products of maltotriose and of acarbose are maltose and glucose, and glucose and pseudotrisaccharide, respectively. No activity with glucose or maltose as substrate. This is Cyclomaltodextrinase from Geobacillus thermopakistaniensis (strain MAS1).